We begin with the raw amino-acid sequence, 251 residues long: Triosephosphate isomerase (251 aa).

Asn-8–Lys-10 is a binding site for substrate. The active-site Electrophile is His-97. Glu-170 acts as the Proton acceptor in catalysis. Residues Gly-176, Ser-215, and Gly-236–Gly-237 contribute to the substrate site.

Belongs to the triosephosphate isomerase family. In terms of assembly, homodimer.

Its subcellular location is the cytoplasm. It catalyses the reaction D-glyceraldehyde 3-phosphate = dihydroxyacetone phosphate. The protein operates within carbohydrate biosynthesis; gluconeogenesis. It participates in carbohydrate degradation; glycolysis; D-glyceraldehyde 3-phosphate from glycerone phosphate: step 1/1. Involved in the gluconeogenesis. Catalyzes stereospecifically the conversion of dihydroxyacetone phosphate (DHAP) to D-glyceraldehyde-3-phosphate (G3P). In Nitratidesulfovibrio vulgaris (strain ATCC 29579 / DSM 644 / CCUG 34227 / NCIMB 8303 / VKM B-1760 / Hildenborough) (Desulfovibrio vulgaris), this protein is Triosephosphate isomerase.